The primary structure comprises 223 residues: Small ribosomal subunit protein uS3 (223 aa).

The KH type-2 domain occupies 39-108; it reads IRNFVKKNSY…NILINIVEVK (70 aa).

Belongs to the universal ribosomal protein uS3 family. In terms of assembly, part of the 30S ribosomal subunit. Forms a tight complex with proteins S10 and S14.

Functionally, binds the lower part of the 30S subunit head. Binds mRNA in the 70S ribosome, positioning it for translation. This Clostridium botulinum (strain Hall / ATCC 3502 / NCTC 13319 / Type A) protein is Small ribosomal subunit protein uS3.